A 125-amino-acid polypeptide reads, in one-letter code: Monothiol glutaredoxin-S2 (125 aa).

Residues 28-124 (AERVGRLVRE…PRLREVGALC (97 aa)) enclose the Glutaredoxin domain. C48 contacts [2Fe-2S] cluster.

This sequence belongs to the glutaredoxin family. CC-type subfamily.

Its subcellular location is the cytoplasm. In terms of biological role, may only reduce GSH-thiol disulfides, but not protein disulfides. The protein is Monothiol glutaredoxin-S2 (GRXS2) of Oryza sativa subsp. japonica (Rice).